We begin with the raw amino-acid sequence, 206 residues long: Holliday junction branch migration complex subunit RuvA (206 aa).

The domain I stretch occupies residues 1–67; it reads MIASIFGKIT…QILEEGFAFN (67 aa). A domain II region spans residues 68–141; sequence TLEEKEWFSK…YDRDDGGKRI (74 aa). The flexible linker stretch occupies residues 141–145; sequence IKPNT. The interval 146–206 is domain III; sequence AMANDYDEMF…QNNEVTNKTA (61 aa).

It belongs to the RuvA family. Homotetramer. Forms an RuvA(8)-RuvB(12)-Holliday junction (HJ) complex. HJ DNA is sandwiched between 2 RuvA tetramers; dsDNA enters through RuvA and exits via RuvB. An RuvB hexamer assembles on each DNA strand where it exits the tetramer. Each RuvB hexamer is contacted by two RuvA subunits (via domain III) on 2 adjacent RuvB subunits; this complex drives branch migration. In the full resolvosome a probable DNA-RuvA(4)-RuvB(12)-RuvC(2) complex forms which resolves the HJ.

It localises to the cytoplasm. In terms of biological role, the RuvA-RuvB-RuvC complex processes Holliday junction (HJ) DNA during genetic recombination and DNA repair, while the RuvA-RuvB complex plays an important role in the rescue of blocked DNA replication forks via replication fork reversal (RFR). RuvA specifically binds to HJ cruciform DNA, conferring on it an open structure. The RuvB hexamer acts as an ATP-dependent pump, pulling dsDNA into and through the RuvAB complex. HJ branch migration allows RuvC to scan DNA until it finds its consensus sequence, where it cleaves and resolves the cruciform DNA. This is Holliday junction branch migration complex subunit RuvA from Mycoplasma pneumoniae (strain ATCC 29342 / M129 / Subtype 1) (Mycoplasmoides pneumoniae).